The chain runs to 313 residues: D-alanine--D-alanine ligase (313 aa).

The ATP-grasp domain occupies 108–308; the sequence is KLVWQQTGVP…YSELVVKVLA (201 aa). 138 to 193 contacts ATP; sequence VAKLGLPLFVKPASEGSSVAVLKVKTADALPAALSEAATHDKIVIVEKSIEGGGEY. Mg(2+) is bound by residues aspartate 262, glutamate 275, and asparagine 277.

Belongs to the D-alanine--D-alanine ligase family. Requires Mg(2+) as cofactor. The cofactor is Mn(2+).

The protein localises to the cytoplasm. The catalysed reaction is 2 D-alanine + ATP = D-alanyl-D-alanine + ADP + phosphate + H(+). The protein operates within cell wall biogenesis; peptidoglycan biosynthesis. Cell wall formation. This chain is D-alanine--D-alanine ligase, found in Burkholderia ambifaria (strain ATCC BAA-244 / DSM 16087 / CCUG 44356 / LMG 19182 / AMMD) (Burkholderia cepacia (strain AMMD)).